A 483-amino-acid polypeptide reads, in one-letter code: V-type proton ATPase subunit H (483 aa).

Ser483 carries the post-translational modification Phosphoserine.

This sequence belongs to the V-ATPase H subunit family. V-ATPase is a heteromultimeric enzyme made up of two complexes: the ATP-hydrolytic V1 complex and the proton translocation V0 complex. The V1 complex consists of three catalytic AB heterodimers that form a heterohexamer, three peripheral stalks each consisting of EG heterodimers, one central rotor including subunits D and F, and the regulatory subunits C and H. The proton translocation complex V0 consists of the proton transport subunit a, a ring of proteolipid subunits c9c'', rotary subunit d, subunits e and f, and the accessory subunits ATP6AP1/Ac45 and ATP6AP2/PRR. Interacts with AP2M1. In terms of tissue distribution, expressed in brain (at protein level).

The protein localises to the cytoplasmic vesicle. The protein resides in the clathrin-coated vesicle membrane. Subunit of the V1 complex of vacuolar(H+)-ATPase (V-ATPase), a multisubunit enzyme composed of a peripheral complex (V1) that hydrolyzes ATP and a membrane integral complex (V0) that translocates protons. V-ATPase is responsible for acidifying and maintaining the pH of intracellular compartments and in some cell types, is targeted to the plasma membrane, where it is responsible for acidifying the extracellular environment. Subunit H is essential for V-ATPase activity, but not for the assembly of the complex. Involved in the endocytosis mediated by clathrin-coated pits, required for the formation of endosomes. The sequence is that of V-type proton ATPase subunit H (ATP6V1H) from Bos taurus (Bovine).